Consider the following 192-residue polypeptide: NADH:FMN oxidoreductase (192 aa).

Positions methionine 1–alanine 20 are disordered. FMN is bound by residues threonine 60 to serine 63, asparagine 77 to serine 84, alanine 111, and arginine 117.

Belongs to the non-flavoprotein flavin reductase family.

It is found in the cytoplasm. The enzyme catalyses FMNH2 + NAD(+) = FMN + NADH + 2 H(+). It participates in sulfur metabolism; dibenzothiophene degradation. Functionally, an NADH:FMN oxidoreductase which supplies reduced FMN for the '4S' desulfurization pathway that removes covalently bound sulfur from dibenzothiophene (DBT) without breaking carbon-carbon bonds. Provides DszA and DszC (DBTO2-monooxygenase and DBT-monooxygenase respectively) with reduced flavin (FMN). This Rhodococcus erythropolis (Arthrobacter picolinophilus) protein is NADH:FMN oxidoreductase.